We begin with the raw amino-acid sequence, 217 residues long: MATGSRTSLLLAFTLLCLPQLKEAGAFPTIPLSRLLDNAMLRAHRLHQLAFDTYQEFEEAYIPKEQKYSFLQNPQTSLCFSESIPTPASKKETQQKSNLELLRISLILIQSWFEPVQLLRSVFANSLLYGVSDSDVYEYLKDLEEGIQTLMERLEDGSPRTGAIFRQTYSKFDINSQNDDALLKNYGLLYCFRKDMDKVETFLRIVQCRSVEGSCGF.

The signal sequence occupies residues 1 to 26 (MATGSRTSLLLAFTLLCLPQLKEAGA). Position 44 (H44) interacts with Zn(2+). The cysteines at positions 79 and 191 are disulfide-linked. S132 carries the phosphoserine modification. A Zn(2+)-binding site is contributed by E200. Cysteines 208 and 215 form a disulfide.

The protein belongs to the somatotropin/prolactin family.

It is found in the secreted. Its function is as follows. Plays an important role in growth control. Its major role in stimulating body growth is to stimulate the liver and other tissues to secrete IGF1. It stimulates both the differentiation and proliferation of myoblasts. It also stimulates amino acid uptake and protein synthesis in muscle and other tissues. This Saimiri boliviensis boliviensis (Bolivian squirrel monkey) protein is Somatotropin (GH1).